Here is a 778-residue protein sequence, read N- to C-terminus: Endonuclease MutS2 (778 aa).

332 to 339 lines the ATP pocket; the sequence is GPNTGGKT. One can recognise a Smr domain in the interval 703–778; it reads IDLRGKMVDE…GLGCTVVTLK (76 aa).

The protein belongs to the DNA mismatch repair MutS family. MutS2 subfamily. As to quaternary structure, homodimer. Binds to stalled ribosomes, contacting rRNA.

Endonuclease that is involved in the suppression of homologous recombination and thus may have a key role in the control of bacterial genetic diversity. In terms of biological role, acts as a ribosome collision sensor, splitting the ribosome into its 2 subunits. Detects stalled/collided 70S ribosomes which it binds and splits by an ATP-hydrolysis driven conformational change. Acts upstream of the ribosome quality control system (RQC), a ribosome-associated complex that mediates the extraction of incompletely synthesized nascent chains from stalled ribosomes and their subsequent degradation. Probably generates substrates for RQC. This is Endonuclease MutS2 from Fusobacterium nucleatum subsp. nucleatum (strain ATCC 25586 / DSM 15643 / BCRC 10681 / CIP 101130 / JCM 8532 / KCTC 2640 / LMG 13131 / VPI 4355).